The chain runs to 758 residues: Polyribonucleotide nucleotidyltransferase (758 aa).

Positions 482 and 488 each coordinate Mg(2+). The KH domain maps to 549–608; that stretch reads PRVLSFYIDKDKISAAIGTKGKNIRSVCERSNAKIEIGDDGKVSVFAISSTEAEAAKNMM. The 69-residue stretch at 618–686 folds into the S1 motif domain; it reads GSIIDAKVVK…KGGCPKLSRR (69 aa). Residues 707–758 form a disordered region; that stretch reads DGLNNRDNYYNNSFNKKPEDNYHSNRPTRPRSGFSNRSRPKFGNNDSSSGFY. Over residues 711 to 721 the composition is skewed to low complexity; that stretch reads NRDNYYNNSFN.

It belongs to the polyribonucleotide nucleotidyltransferase family. Mg(2+) is required as a cofactor.

Its subcellular location is the cytoplasm. It catalyses the reaction RNA(n+1) + phosphate = RNA(n) + a ribonucleoside 5'-diphosphate. Its function is as follows. Involved in mRNA degradation. Catalyzes the phosphorolysis of single-stranded polyribonucleotides processively in the 3'- to 5'-direction. This is Polyribonucleotide nucleotidyltransferase from Wolbachia pipientis subsp. Culex pipiens (strain wPip).